The primary structure comprises 512 residues: Inosine-5'-monophosphate dehydrogenase (512 aa).

2 consecutive CBS domains span residues 110–169 (FIMK…SAPV) and 173–231 (MTRR…PNSS). Residues 268 to 270 (DSS) and 318 to 320 (GMG) each bind NAD(+). The K(+) site is built by glycine 320 and glycine 322. Serine 323 is a binding site for IMP. Cysteine 325 is a binding site for K(+). Cysteine 325 acts as the Thioimidate intermediate in catalysis. Residues 358–360 (DGG), 381–382 (GS), and 405–409 (YRGMG) contribute to the IMP site. Arginine 423 (proton acceptor) is an active-site residue. IMP is bound at residue glutamine 435. Glutamate 494 and glycine 495 together coordinate K(+). Residues 510–512 (SKL) carry the Microbody targeting signal motif.

It belongs to the IMPDH/GMPR family. Homotetramer. It depends on K(+) as a cofactor.

Its subcellular location is the glycosome. The enzyme catalyses IMP + NAD(+) + H2O = XMP + NADH + H(+). The protein operates within purine metabolism; XMP biosynthesis via de novo pathway; XMP from IMP: step 1/1. With respect to regulation, mycophenolic acid (MPA) is a non-competitive inhibitor that prevents formation of the closed enzyme conformation by binding to the same site as the amobile flap. In contrast, mizoribine monophosphate (MZP) is a competitive inhibitor that induces the closed conformation. MPA is a potent inhibitor of mammalian IMPDHs but a poor inhibitor of the bacterial enzymes. MZP is a more potent inhibitor of bacterial IMPDH. Its function is as follows. Catalyzes the conversion of inosine 5'-phosphate (IMP) to xanthosine 5'-phosphate (XMP), the first committed and rate-limiting step in the de novo synthesis of guanine nucleotides, and therefore plays an important role in the regulation of cell growth. This chain is Inosine-5'-monophosphate dehydrogenase, found in Trypanosoma brucei brucei.